We begin with the raw amino-acid sequence, 215 residues long: N-(5'-phosphoribosyl)anthranilate isomerase (215 aa).

This sequence belongs to the TrpF family.

It carries out the reaction N-(5-phospho-beta-D-ribosyl)anthranilate = 1-(2-carboxyphenylamino)-1-deoxy-D-ribulose 5-phosphate. Its pathway is amino-acid biosynthesis; L-tryptophan biosynthesis; L-tryptophan from chorismate: step 3/5. This is N-(5'-phosphoribosyl)anthranilate isomerase from Cellvibrio japonicus (strain Ueda107) (Pseudomonas fluorescens subsp. cellulosa).